The following is a 71-amino-acid chain: Defensin-like protein 124 (71 aa).

Residues 1-25 (MSKPTVIVIFMAILVLGMATKETQG) form the signal peptide. 4 disulfides stabilise this stretch: C28-C71, C40-C60, C45-C65, and C49-C67.

This sequence belongs to the DEFL family.

It is found in the secreted. This Arabidopsis thaliana (Mouse-ear cress) protein is Defensin-like protein 124 (LCR16).